The chain runs to 202 residues: Large ribosomal subunit protein bL25 (202 aa).

The protein belongs to the bacterial ribosomal protein bL25 family. CTC subfamily. In terms of assembly, part of the 50S ribosomal subunit; part of the 5S rRNA/L5/L18/L25 subcomplex. Contacts the 5S rRNA. Binds to the 5S rRNA independently of L5 and L18.

In terms of biological role, this is one of the proteins that binds to the 5S RNA in the ribosome where it forms part of the central protuberance. The sequence is that of Large ribosomal subunit protein bL25 from Chlorobium luteolum (strain DSM 273 / BCRC 81028 / 2530) (Pelodictyon luteolum).